Here is a 35-residue protein sequence, read N- to C-terminus: Thrombin-like enzyme cerastobin (35 aa).

Positions 1–35 (VIGGAKCNINEHRSIVLLYSSRLFGHTLINKEWVL) constitute a Peptidase S1 domain.

This sequence belongs to the peptidase S1 family. Snake venom subfamily. In terms of assembly, monomer. As to expression, expressed by the venom gland.

The protein resides in the secreted. Its activity is regulated as follows. Inhibited by diisopropylfluorophosphate (DFP). Thrombin-like snake venom serine protease, that cleaves both alpha-chain (FGA) and beta-chain (FGB) of fibrinogen. Partially degrades factor X (F10), and release bradykinin from kininogen (KNG). Potently induces platelet aggregation. Shows a proteolytic activity towards protein constituents of the platelets cytoskeleton. Hydrolyzes actin, actin-binding protein, and P235. Shows a preferential cleavage at Arg-|-Xaa bonds. This chain is Thrombin-like enzyme cerastobin, found in Cerastes vipera (Sahara sand viper).